Here is a 257-residue protein sequence, read N- to C-terminus: Probable pectate lyase G (257 aa).

Residues 1 to 24 (MPVLSKLLPTLTLTLPLLAGPCLA) form the signal peptide.

This sequence belongs to the polysaccharide lyase 3 family. The cofactor is Ca(2+).

It is found in the secreted. It carries out the reaction Eliminative cleavage of (1-&gt;4)-alpha-D-galacturonan to give oligosaccharides with 4-deoxy-alpha-D-galact-4-enuronosyl groups at their non-reducing ends.. Its function is as follows. Pectinolytic enzyme consist of four classes of enzymes: pectin lyase, polygalacturonase, pectin methylesterase and rhamnogalacturonase. Among pectinolytic enzymes, pectin lyase is the most important in depolymerization of pectin, since it cleaves internal glycosidic bonds of highly methylated pectins. Favors pectate, the anion, over pectin, the methyl ester. In Emericella nidulans (strain FGSC A4 / ATCC 38163 / CBS 112.46 / NRRL 194 / M139) (Aspergillus nidulans), this protein is Probable pectate lyase G (plyG).